A 146-amino-acid polypeptide reads, in one-letter code: MANERTLSIIKPDGVEKGVIGQVIARFEKAGLKPIAMKMTHLSQAEAEGFYAVHKARPFFNDLVKFMTSGPVVLMVLEGEGAVAKNREIMGATDPAKAAAGTIRKDFASNIEKNTVHGSDSAENAKIEVSYFFPETAIHTYEWKKA.

Positions 11, 59, 87, 93, 104, and 114 each coordinate ATP. His-117 (pros-phosphohistidine intermediate) is an active-site residue.

Belongs to the NDK family. Homotetramer. It depends on Mg(2+) as a cofactor.

The protein resides in the cytoplasm. It catalyses the reaction a 2'-deoxyribonucleoside 5'-diphosphate + ATP = a 2'-deoxyribonucleoside 5'-triphosphate + ADP. The catalysed reaction is a ribonucleoside 5'-diphosphate + ATP = a ribonucleoside 5'-triphosphate + ADP. Major role in the synthesis of nucleoside triphosphates other than ATP. The ATP gamma phosphate is transferred to the NDP beta phosphate via a ping-pong mechanism, using a phosphorylated active-site intermediate. The chain is Nucleoside diphosphate kinase from Anaeromyxobacter sp. (strain Fw109-5).